The following is a 214-amino-acid chain: Large ribosomal subunit protein bL25 (214 aa).

The interval 187–214 (AEVAPSIEETVEPEVIKKGKKAEEEEEK) is disordered. A compositionally biased stretch (basic and acidic residues) spans 200–214 (EVIKKGKKAEEEEEK).

The protein belongs to the bacterial ribosomal protein bL25 family. CTC subfamily. Part of the 50S ribosomal subunit; part of the 5S rRNA/L5/L18/L25 subcomplex. Contacts the 5S rRNA. Binds to the 5S rRNA independently of L5 and L18.

This is one of the proteins that binds to the 5S RNA in the ribosome where it forms part of the central protuberance. This Thermodesulfovibrio yellowstonii (strain ATCC 51303 / DSM 11347 / YP87) protein is Large ribosomal subunit protein bL25.